Here is a 295-residue protein sequence, read N- to C-terminus: UDP-N-acetylenolpyruvoylglucosamine reductase (295 aa).

One can recognise an FAD-binding PCMH-type domain in the interval 24-188 (KVGGNAEIFF…LKAIFKANKG (165 aa)). The active site involves arginine 168. The Proton donor role is filled by serine 217. Residue glutamate 287 is part of the active site.

The protein belongs to the MurB family. It depends on FAD as a cofactor.

The protein localises to the cytoplasm. The catalysed reaction is UDP-N-acetyl-alpha-D-muramate + NADP(+) = UDP-N-acetyl-3-O-(1-carboxyvinyl)-alpha-D-glucosamine + NADPH + H(+). It participates in cell wall biogenesis; peptidoglycan biosynthesis. Functionally, cell wall formation. The polypeptide is UDP-N-acetylenolpyruvoylglucosamine reductase (Rickettsia typhi (strain ATCC VR-144 / Wilmington)).